The primary structure comprises 460 residues: ATP synthase subunit beta (460 aa).

150-157 is a binding site for ATP; sequence GGAGVGKT.

This sequence belongs to the ATPase alpha/beta chains family. As to quaternary structure, F-type ATPases have 2 components, CF(1) - the catalytic core - and CF(0) - the membrane proton channel. CF(1) has five subunits: alpha(3), beta(3), gamma(1), delta(1), epsilon(1). CF(0) has three main subunits: a(1), b(2) and c(9-12). The alpha and beta chains form an alternating ring which encloses part of the gamma chain. CF(1) is attached to CF(0) by a central stalk formed by the gamma and epsilon chains, while a peripheral stalk is formed by the delta and b chains.

It localises to the cell inner membrane. The enzyme catalyses ATP + H2O + 4 H(+)(in) = ADP + phosphate + 5 H(+)(out). Its function is as follows. Produces ATP from ADP in the presence of a proton gradient across the membrane. The catalytic sites are hosted primarily by the beta subunits. This Sodalis glossinidius (strain morsitans) protein is ATP synthase subunit beta.